The following is a 101-amino-acid chain: Putative antitoxin HigA2 (101 aa).

An HTH cro/C1-type domain is found at 35–90; the sequence is LRELRAAQSLTQVQVAALAHIRQSRVSSIENGDIGSAQVNTLRKYVSALGGELDIT. Positions 46-65 form a DNA-binding region, H-T-H motif; it reads QVQVAALAHIRQSRVSSIEN.

In terms of biological role, putative antitoxin component of a type II toxin-antitoxin (TA) system. Its cognate toxin would be HigB2. The polypeptide is Putative antitoxin HigA2 (Mycobacterium tuberculosis (strain ATCC 25618 / H37Rv)).